The chain runs to 401 residues: uncharacterized protein (401 aa).

Residues C7, C13, C16, and C94 each coordinate [4Fe-4S] cluster. The S-adenosyl-L-methionine site is built by Q230, Y259, E280, and D328. The Nucleophile role is filled by C355.

The protein belongs to the class I-like SAM-binding methyltransferase superfamily. RNA M5U methyltransferase family.

This is an uncharacterized protein from Chlamydia pneumoniae (Chlamydophila pneumoniae).